The following is a 353-amino-acid chain: Trans-enoyl reductase eqxC (353 aa).

45–48 (VDTK) serves as a coordination point for NADP(+). Residue 131–138 (ISFMTTGL) coordinates substrate. NADP(+) contacts are provided by residues 166–169 (SSAT), 189–192 (SPRN), Tyr207, and 254–255 (LE). Residue 275 to 279 (GPQML) participates in substrate binding. Residue 344–345 (IS) coordinates NADP(+).

It belongs to the zinc-containing alcohol dehydrogenase family. As to quaternary structure, monomer.

It carries out the reaction L-serine + 7 malonyl-CoA + acetyl-CoA + 2 S-adenosyl-L-methionine + ATP + 8 NADPH + 11 H(+) = (5S)-3-[(2E,6R,8E,10E,12E)-2,6-dimethyltetradeca-2,8,10,12-tetraenoyl]-5-(hydroxymethyl)pyrrolidine-2,4-dione + AMP + 2 S-adenosyl-L-homocysteine + 7 CO2 + diphosphate + 8 NADP(+) + 8 CoA + 6 H2O. Its pathway is mycotoxin biosynthesis. Trans-enoyl reductase; part of the gene cluster that mediates the biosynthesis of equisetin, a trans-fused decalin-containing tetramic acid with antimicrobial activity. The PKS module of eqxS together with the enoylreductase eqxC catalyze the formation of the polyketide unit which is then conjugated to L-serine by the condensation domain of the eqxS NRPS module. Activity of the Dieckmann cyclase domain (RED) results in release of the Dieckmann product intermediate. Diels-Alderase eqx3 is involved in endo-selective Diels-Alder cycloaddition to form the decalin ring, leading to the production of N-desmethylequisetin also called trichosetin. Subsequent N-methylation is carried out by eqxD to give equisetin. The protein is Trans-enoyl reductase eqxC of Fusarium heterosporum.